The chain runs to 458 residues: Ribulose bisphosphate carboxylase large chain (458 aa).

Lys-7 carries the N6,N6,N6-trimethyllysine modification. Asn-116 and Thr-166 together coordinate substrate. The active-site Proton acceptor is Lys-168. Lys-170 contributes to the substrate binding site. Mg(2+) is bound by residues Lys-194, Asp-196, and Glu-197. Lys-194 is subject to N6-carboxylysine. The active-site Proton acceptor is His-287. Residues Arg-288, His-320, and Ser-372 each coordinate substrate.

This sequence belongs to the RuBisCO large chain family. Type I subfamily. In terms of assembly, heterohexadecamer of 8 large chains and 8 small chains; disulfide-linked. The disulfide link is formed within the large subunit homodimers. Mg(2+) serves as cofactor. The disulfide bond which can form in the large chain dimeric partners within the hexadecamer appears to be associated with oxidative stress and protein turnover.

The protein localises to the plastid. It localises to the chloroplast. The enzyme catalyses 2 (2R)-3-phosphoglycerate + 2 H(+) = D-ribulose 1,5-bisphosphate + CO2 + H2O. It catalyses the reaction D-ribulose 1,5-bisphosphate + O2 = 2-phosphoglycolate + (2R)-3-phosphoglycerate + 2 H(+). Functionally, ruBisCO catalyzes two reactions: the carboxylation of D-ribulose 1,5-bisphosphate, the primary event in carbon dioxide fixation, as well as the oxidative fragmentation of the pentose substrate in the photorespiration process. Both reactions occur simultaneously and in competition at the same active site. The chain is Ribulose bisphosphate carboxylase large chain from Gladiolus gueinzii (Coastal gladiolus).